We begin with the raw amino-acid sequence, 1006 residues long: D-2-hydroxyglutarate dehydrogenase (1006 aa).

An FAD-binding PCMH-type domain is found at tyrosine 47–isoleucine 279. Positions 397 and 495 each coordinate (R)-2-hydroxyglutarate. Residues serine 655–arginine 687 enclose the 4Fe-4S ferredoxin-type domain. The [4Fe-4S] cluster site is built by cysteine 665, cysteine 668, cysteine 671, and cysteine 675.

The protein in the N-terminal section; belongs to the FAD-binding oxidoreductase/transferase type 4 family. It depends on [4Fe-4S] cluster as a cofactor. FAD serves as cofactor.

It catalyses the reaction (R)-2-hydroxyglutarate + A = 2-oxoglutarate + AH2. The protein operates within amino-acid degradation. In terms of biological role, catalyzes the oxidation of D-2-hydroxyglutarate (D-2-HGA) to 2-oxoglutarate. Is involved in a D-lysine catabolic pathway. The sequence is that of D-2-hydroxyglutarate dehydrogenase from Pseudomonas putida (strain ATCC 47054 / DSM 6125 / CFBP 8728 / NCIMB 11950 / KT2440).